A 237-amino-acid chain; its full sequence is Orotidine 5'-phosphate decarboxylase (237 aa).

Residues Asp-11, Lys-34, 61-70 (DLKLHDIPNT), Thr-124, Arg-186, Gln-195, Gly-215, and Arg-216 each bind substrate. The active-site Proton donor is the Lys-63.

It belongs to the OMP decarboxylase family. Type 1 subfamily. In terms of assembly, homodimer.

The catalysed reaction is orotidine 5'-phosphate + H(+) = UMP + CO2. The protein operates within pyrimidine metabolism; UMP biosynthesis via de novo pathway; UMP from orotate: step 2/2. In terms of biological role, catalyzes the decarboxylation of orotidine 5'-monophosphate (OMP) to uridine 5'-monophosphate (UMP). The protein is Orotidine 5'-phosphate decarboxylase of Lactococcus lactis subsp. cremoris (strain SK11).